The primary structure comprises 431 residues: 4-hydroxy-3-methylbut-2-en-1-yl diphosphate synthase (flavodoxin) (431 aa).

Residues 1 to 12 show a composition bias toward basic and acidic residues; that stretch reads MNKLENPLRDDV. The disordered stretch occupies residues 1 to 20; it reads MNKLENPLRDDVAGPAPRHQ. [4Fe-4S] cluster contacts are provided by C310, C313, C356, and E363.

It belongs to the IspG family. It depends on [4Fe-4S] cluster as a cofactor.

It catalyses the reaction (2E)-4-hydroxy-3-methylbut-2-enyl diphosphate + oxidized [flavodoxin] + H2O + 2 H(+) = 2-C-methyl-D-erythritol 2,4-cyclic diphosphate + reduced [flavodoxin]. Its pathway is isoprenoid biosynthesis; isopentenyl diphosphate biosynthesis via DXP pathway; isopentenyl diphosphate from 1-deoxy-D-xylulose 5-phosphate: step 5/6. Functionally, converts 2C-methyl-D-erythritol 2,4-cyclodiphosphate (ME-2,4cPP) into 1-hydroxy-2-methyl-2-(E)-butenyl 4-diphosphate. This chain is 4-hydroxy-3-methylbut-2-en-1-yl diphosphate synthase (flavodoxin), found in Rhodopseudomonas palustris (strain TIE-1).